A 178-amino-acid chain; its full sequence is ATP synthase subunit delta (178 aa).

This sequence belongs to the ATPase delta chain family. F-type ATPases have 2 components, F(1) - the catalytic core - and F(0) - the membrane proton channel. F(1) has five subunits: alpha(3), beta(3), gamma(1), delta(1), epsilon(1). F(0) has three main subunits: a(1), b(2) and c(10-14). The alpha and beta chains form an alternating ring which encloses part of the gamma chain. F(1) is attached to F(0) by a central stalk formed by the gamma and epsilon chains, while a peripheral stalk is formed by the delta and b chains.

The protein resides in the cell membrane. Functionally, f(1)F(0) ATP synthase produces ATP from ADP in the presence of a proton or sodium gradient. F-type ATPases consist of two structural domains, F(1) containing the extramembraneous catalytic core and F(0) containing the membrane proton channel, linked together by a central stalk and a peripheral stalk. During catalysis, ATP synthesis in the catalytic domain of F(1) is coupled via a rotary mechanism of the central stalk subunits to proton translocation. This protein is part of the stalk that links CF(0) to CF(1). It either transmits conformational changes from CF(0) to CF(1) or is implicated in proton conduction. This chain is ATP synthase subunit delta, found in Streptococcus equinus (Streptococcus bovis).